Reading from the N-terminus, the 220-residue chain is Adenylate kinase (220 aa).

Residue 12-17 coordinates ATP; that stretch reads GAGKGT. The tract at residues 32–62 is NMP; it reads STGDIFRDIVKKENDELGKKIKEIMEKGELV. Residues threonine 33, arginine 38, 60 to 62, 88 to 91, and glutamine 95 contribute to the AMP site; these read ELV and GYPR. The LID stretch occupies residues 129 to 166; that stretch reads SRRICPKCGRIYNMISLPPKEDELCDDCKVKLVQRDDD. Position 130 (arginine 130) interacts with ATP. Zn(2+) is bound by residues cysteine 133 and cysteine 136. 139–140 lines the ATP pocket; it reads IY. Residues cysteine 153 and cysteine 156 each contribute to the Zn(2+) site. The AMP site is built by arginine 163 and arginine 174. Position 202 (isoleucine 202) interacts with ATP.

Belongs to the adenylate kinase family. As to quaternary structure, monomer.

The protein localises to the cytoplasm. The enzyme catalyses AMP + ATP = 2 ADP. It participates in purine metabolism; AMP biosynthesis via salvage pathway; AMP from ADP: step 1/1. Its function is as follows. Catalyzes the reversible transfer of the terminal phosphate group between ATP and AMP. Plays an important role in cellular energy homeostasis and in adenine nucleotide metabolism. This Thermotoga neapolitana protein is Adenylate kinase.